The sequence spans 488 residues: Ribulose bisphosphate carboxylase large chain 2 (488 aa).

Substrate contacts are provided by N128 and T178. K180 acts as the Proton acceptor in catalysis. Residue K182 participates in substrate binding. The Mg(2+) site is built by K206, D208, and E209. K206 carries the post-translational modification N6-carboxylysine. The active-site Proton acceptor is the H298. Residues R299, H331, and S383 each contribute to the substrate site.

Belongs to the RuBisCO large chain family. Type I subfamily. Heterohexadecamer of 8 large chains and 8 small chains. Requires Mg(2+) as cofactor.

The catalysed reaction is 2 (2R)-3-phosphoglycerate + 2 H(+) = D-ribulose 1,5-bisphosphate + CO2 + H2O. It carries out the reaction D-ribulose 1,5-bisphosphate + O2 = 2-phosphoglycolate + (2R)-3-phosphoglycerate + 2 H(+). RuBisCO catalyzes two reactions: the carboxylation of D-ribulose 1,5-bisphosphate, the primary event in carbon dioxide fixation, as well as the oxidative fragmentation of the pentose substrate. Both reactions occur simultaneously and in competition at the same active site. The sequence is that of Ribulose bisphosphate carboxylase large chain 2 from Nitrobacter hamburgensis (strain DSM 10229 / NCIMB 13809 / X14).